Consider the following 741-residue polypeptide: Type VI secretion system spike protein VgrG1b (741 aa).

Composition is skewed to polar residues over residues 614–629 (SIGANRSESVGNNETI) and 649–663 (GNQSTSIGKNESRSV). Positions 614-678 (SIGANRSESV…TSVGKDDSLD (65 aa)) are disordered.

Belongs to the VgrG protein family.

The protein localises to the secreted. Part of the H1 type VI secretion system (H1-T6SS) specialized secretion system, which delivers several virulence factors in both prokaryotic and eukaryotic cells during infection. Allows the delivery of the Tse7 toxin to target cells where it exerts toxicity through its nuclease domain. In Pseudomonas aeruginosa (strain ATCC 15692 / DSM 22644 / CIP 104116 / JCM 14847 / LMG 12228 / 1C / PRS 101 / PAO1), this protein is Type VI secretion system spike protein VgrG1b.